Here is a 269-residue protein sequence, read N- to C-terminus: Ribonuclease HII (269 aa).

The RNase H type-2 domain occupies 83–269 (YLIAGVDEVG…HRMSFLTNIL (187 aa)). A divalent metal cation-binding residues include D89, E90, and D185.

Belongs to the RNase HII family. Mn(2+) serves as cofactor. It depends on Mg(2+) as a cofactor.

It is found in the cytoplasm. The enzyme catalyses Endonucleolytic cleavage to 5'-phosphomonoester.. Functionally, endonuclease that specifically degrades the RNA of RNA-DNA hybrids. This chain is Ribonuclease HII, found in Clostridium botulinum (strain ATCC 19397 / Type A).